The primary structure comprises 491 residues: Glutamate--tRNA ligase (491 aa).

A 'HIGH' region motif is present at residues 14–24 (PSPTGSPHVGL). The Zn(2+) site is built by Cys111, Cys113, Cys136, and Asp138. Positions 257–261 (KLSKR) match the 'KMSKS' region motif. Lys260 contributes to the ATP binding site.

It belongs to the class-I aminoacyl-tRNA synthetase family. Glutamate--tRNA ligase type 1 subfamily. In terms of assembly, monomer. Zn(2+) serves as cofactor.

It localises to the cytoplasm. The enzyme catalyses tRNA(Glu) + L-glutamate + ATP = L-glutamyl-tRNA(Glu) + AMP + diphosphate. Its function is as follows. Catalyzes the attachment of glutamate to tRNA(Glu) in a two-step reaction: glutamate is first activated by ATP to form Glu-AMP and then transferred to the acceptor end of tRNA(Glu). In Nocardioides sp. (strain ATCC BAA-499 / JS614), this protein is Glutamate--tRNA ligase.